Here is a 352-residue protein sequence, read N- to C-terminus: Ion-translocating oxidoreductase complex subunit D (352 aa).

Transmembrane regions (helical) follow at residues 20–40 (IMLLVLLAAVPGIAAQLCFFG), 42–62 (GTLVQILLASVSALLAEALVL), 89–109 (IPPLAPWWMVVLGTVFAVIIA), and 123–143 (PAMIGYVVLLISFPVQMTSWL). The residue at position 187 (Thr-187) is an FMN phosphoryl threonine. The next 5 membrane-spanning stretches (helical) occupy residues 215–235 (LAGAGWQWVNLAWLAGGVWLL), 242–262 (WHIPLSFLVTLALCATLGWLF), 267–287 (LAAPQIHLLSGATMLGAFFIL), 301–321 (LIFGALAGLLVWLIRSFGGYP), and 322–342 (DGVAFAVLLANITVPLIDYYT).

It belongs to the NqrB/RnfD family. As to quaternary structure, the complex is composed of six subunits: RsxA, RsxB, RsxC, RsxD, RsxE and RsxG. It depends on FMN as a cofactor.

The protein localises to the cell inner membrane. Part of a membrane-bound complex that couples electron transfer with translocation of ions across the membrane. Required to maintain the reduced state of SoxR. This chain is Ion-translocating oxidoreductase complex subunit D, found in Escherichia coli O7:K1 (strain IAI39 / ExPEC).